Here is a 380-residue protein sequence, read N- to C-terminus: Coiled-coil domain-containing protein 74B (380 aa).

Disordered stretches follow at residues methionine 1 to leucine 51, leucine 89 to arginine 108, and glycine 128 to glutamine 202. A compositionally biased stretch (polar residues) spans leucine 34 to serine 44. The stretch at glutamine 47 to glutamine 93 forms a coiled coil. Over residues arginine 141 to arginine 151 the composition is skewed to basic residues. Residues aspartate 165–glycine 182 show a composition bias toward polar residues.

The polypeptide is Coiled-coil domain-containing protein 74B (CCDC74B) (Homo sapiens (Human)).